Consider the following 285-residue polypeptide: 2-dehydro-3-deoxyphosphooctonate aldolase (285 aa).

This sequence belongs to the KdsA family.

The protein resides in the cytoplasm. It catalyses the reaction D-arabinose 5-phosphate + phosphoenolpyruvate + H2O = 3-deoxy-alpha-D-manno-2-octulosonate-8-phosphate + phosphate. Its pathway is carbohydrate biosynthesis; 3-deoxy-D-manno-octulosonate biosynthesis; 3-deoxy-D-manno-octulosonate from D-ribulose 5-phosphate: step 2/3. The protein operates within bacterial outer membrane biogenesis; lipopolysaccharide biosynthesis. In Acinetobacter baylyi (strain ATCC 33305 / BD413 / ADP1), this protein is 2-dehydro-3-deoxyphosphooctonate aldolase.